A 208-amino-acid polypeptide reads, in one-letter code: Protein-L-isoaspartate O-methyltransferase (208 aa).

The active site involves Ser59.

Belongs to the methyltransferase superfamily. L-isoaspartyl/D-aspartyl protein methyltransferase family.

The protein resides in the cytoplasm. The catalysed reaction is [protein]-L-isoaspartate + S-adenosyl-L-methionine = [protein]-L-isoaspartate alpha-methyl ester + S-adenosyl-L-homocysteine. Catalyzes the methyl esterification of L-isoaspartyl residues in peptides and proteins that result from spontaneous decomposition of normal L-aspartyl and L-asparaginyl residues. It plays a role in the repair and/or degradation of damaged proteins. This chain is Protein-L-isoaspartate O-methyltransferase, found in Proteus mirabilis (strain HI4320).